Here is a 132-residue protein sequence, read N- to C-terminus: ATP synthase epsilon chain (132 aa).

This sequence belongs to the ATPase epsilon chain family. In terms of assembly, F-type ATPases have 2 components, CF(1) - the catalytic core - and CF(0) - the membrane proton channel. CF(1) has five subunits: alpha(3), beta(3), gamma(1), delta(1), epsilon(1). CF(0) has three main subunits: a, b and c.

It is found in the cell inner membrane. Functionally, produces ATP from ADP in the presence of a proton gradient across the membrane. This chain is ATP synthase epsilon chain, found in Cereibacter sphaeroides (strain ATCC 17025 / ATH 2.4.3) (Rhodobacter sphaeroides).